The primary structure comprises 382 residues: Anhydro-N-acetylmuramic acid kinase (382 aa).

Position 9–16 (9–16 (GTSLDGID)) interacts with ATP.

This sequence belongs to the anhydro-N-acetylmuramic acid kinase family.

The enzyme catalyses 1,6-anhydro-N-acetyl-beta-muramate + ATP + H2O = N-acetyl-D-muramate 6-phosphate + ADP + H(+). The protein operates within amino-sugar metabolism; 1,6-anhydro-N-acetylmuramate degradation. It functions in the pathway cell wall biogenesis; peptidoglycan recycling. Catalyzes the specific phosphorylation of 1,6-anhydro-N-acetylmuramic acid (anhMurNAc) with the simultaneous cleavage of the 1,6-anhydro ring, generating MurNAc-6-P. Is required for the utilization of anhMurNAc either imported from the medium or derived from its own cell wall murein, and thus plays a role in cell wall recycling. In Bacillus cereus (strain AH820), this protein is Anhydro-N-acetylmuramic acid kinase.